The chain runs to 927 residues: Small conductance calcium-activated potassium channel protein (927 aa).

The span at 1-31 shows a compositional bias: polar residues; it reads MSIQKLNDTTNSGYVSSEETDSLLVSSSNPS. Disordered regions lie at residues 1 to 131, 181 to 251, and 296 to 336; these read MSIQ…EDVE, LSLK…VKSA, and HLHQ…SSST. Residues 45 to 62 are compositionally biased toward low complexity; sequence SNSTNGPTTGASTSSSGS. Over residues 63–77 the composition is skewed to gly residues; that stretch reads VSGGGGGSGSGGGSA. Polar residues-rich tracts occupy residues 95 to 107 and 200 to 214; these read TSTY…QSQH and NLGT…SSIP. 2 stretches are compositionally biased toward low complexity: residues 219 to 232 and 296 to 308; these read SRCR…RRAS and HLHQ…SQQQ. Polar residues predominate over residues 314–336; sequence ITSSPTNGSRIIRQSSQPESSST. Residues 489–509 traverse the membrane as a helical segment; sequence ALVMGMFGIIVMVIENELSSA. A helical transmembrane segment spans residues 530–550; that stretch reads TVILLGLIVAYHALEVQLFMI. The chain crosses the membrane as a helical span at residues 569–589; it reads IGLELFICAIHPIPGEYYFQW. A helical membrane pass occupies residues 609-629; sequence VALSLPMFLRLYLICRVMLLH. The helical transmembrane segment at 658–678 threads the bilayer; the sequence is LMTICPGTVLLVFMVSLWIIA. The pore-forming intramembrane region spans 696–716; sequence LLNSMWLTAITFLCVGYGDIV. A helical transmembrane segment spans residues 724–744; it reads GITLTCGMVGAGCTALLVAVV. The tract at residues 763–839 is calmodulin-binding; sequence DTQLTKRLKN…ITDMAKTQNT (77 aa).

The protein belongs to the potassium channel KCNN family. SK subfamily. In terms of assembly, heterooligomer. The complex is composed of 4 channel subunits each of which binds to a calmodulin subunit which regulates the channel activity through calcium-binding.

The protein resides in the membrane. Its function is as follows. Forms a voltage-independent potassium channel activated by intracellular calcium. Activation is followed by membrane hyperpolarization. Thought to regulate neuronal excitability by contributing to the slow component of synaptic afterhyperpolarization. The channel is blocked by apamin. This Drosophila melanogaster (Fruit fly) protein is Small conductance calcium-activated potassium channel protein.